The chain runs to 179 residues: UPF0227 protein Ssed_2836 (179 aa).

Belongs to the UPF0227 family.

The protein is UPF0227 protein Ssed_2836 of Shewanella sediminis (strain HAW-EB3).